A 112-amino-acid chain; its full sequence is Colipase (112 aa).

An N-terminal signal peptide occupies residues 1–17; sequence MEKILVLLLVALAVVYA. The propeptide at 18-22 is enterostatin, activation peptide; it reads VPDPR. Cystine bridges form between C34–C45, C40–C56, C44–C78, C66–C86, and C80–C104.

The protein belongs to the colipase family. Forms a 1:1 stoichiometric complex with pancreatic lipase. In terms of tissue distribution, expressed by the pancreas.

Its subcellular location is the secreted. Its function is as follows. Colipase is a cofactor of pancreatic lipase. It allows the lipase to anchor itself to the lipid-water interface. Without colipase the enzyme is washed off by bile salts, which have an inhibitory effect on the lipase. Enterostatin has a biological activity as a satiety signal. The chain is Colipase (CLPS) from Canis lupus familiaris (Dog).